A 213-amino-acid polypeptide reads, in one-letter code: MKILITAFDPFGGEKKNPALEAIKLLPEQIKNHQITKLEIPTVFHKSSDKIADKLKAEHFDAVIAIGQAGGRYNLTPERVGINIDDARIPDNENNQPIDIPIQQDGAPAYFSNLPVKKMTQAIKDAGIPAALSNTAGTFVCNHILYQLGYLQATRYPDIKFGFIHVPFIPEQVVDKPDKPSMALSSIVTGLEAAIGAISEDNQDIKEALGEIQ.

Residues Glu78, Cys141, and His165 contribute to the active site.

The protein belongs to the peptidase C15 family. Homotetramer.

It is found in the cytoplasm. It catalyses the reaction Release of an N-terminal pyroglutamyl group from a polypeptide, the second amino acid generally not being Pro.. Its function is as follows. Removes 5-oxoproline from various penultimate amino acid residues except L-proline. This is Pyrrolidone-carboxylate peptidase from Staphylococcus carnosus (strain TM300).